A 658-amino-acid chain; its full sequence is DNA mismatch repair protein MutL (658 aa).

Disordered regions lie at residues 114–137 and 437–456; these read RQND…PTAA and RFGN…PLSD. Residues 442–456 are compositionally biased toward polar residues; it reads PSETPAPQTDTPLSD.

This sequence belongs to the DNA mismatch repair MutL/HexB family.

In terms of biological role, this protein is involved in the repair of mismatches in DNA. It is required for dam-dependent methyl-directed DNA mismatch repair. May act as a 'molecular matchmaker', a protein that promotes the formation of a stable complex between two or more DNA-binding proteins in an ATP-dependent manner without itself being part of a final effector complex. The protein is DNA mismatch repair protein MutL of Neisseria meningitidis serogroup B (strain ATCC BAA-335 / MC58).